Reading from the N-terminus, the 674-residue chain is UvrABC system protein B (674 aa).

The 389-residue stretch at 26–414 folds into the Helicase ATP-binding domain; the sequence is EGLDSGLAHQ…SGNDIAEQVV (389 aa). Residue 39–46 participates in ATP binding; sequence GVTGSGKT. The short motif at 92 to 115 is the Beta-hairpin element; that stretch reads YYDYYQPEAYVPTTDTFIEKDASV. The 155-residue stretch at 432–586 folds into the Helicase C-terminal domain; that stretch reads QVDDLLSEIR…ALHNKKNGIT (155 aa). A UVR domain is found at 634–669; that stretch reads ELEIQRLETEMYDLAQNLEFEKAAEARDKIHTLRQQ.

This sequence belongs to the UvrB family. As to quaternary structure, forms a heterotetramer with UvrA during the search for lesions. Interacts with UvrC in an incision complex.

It is found in the cytoplasm. Functionally, the UvrABC repair system catalyzes the recognition and processing of DNA lesions. A damage recognition complex composed of 2 UvrA and 2 UvrB subunits scans DNA for abnormalities. Upon binding of the UvrA(2)B(2) complex to a putative damaged site, the DNA wraps around one UvrB monomer. DNA wrap is dependent on ATP binding by UvrB and probably causes local melting of the DNA helix, facilitating insertion of UvrB beta-hairpin between the DNA strands. Then UvrB probes one DNA strand for the presence of a lesion. If a lesion is found the UvrA subunits dissociate and the UvrB-DNA preincision complex is formed. This complex is subsequently bound by UvrC and the second UvrB is released. If no lesion is found, the DNA wraps around the other UvrB subunit that will check the other stand for damage. The protein is UvrABC system protein B of Photobacterium profundum (strain SS9).